Reading from the N-terminus, the 251-residue chain is Hydroxyacylglutathione hydrolase (251 aa).

Zn(2+)-binding residues include His53, His55, Asp57, His58, His110, Asp127, and His165.

The protein belongs to the metallo-beta-lactamase superfamily. Glyoxalase II family. As to quaternary structure, monomer. Requires Zn(2+) as cofactor.

The catalysed reaction is an S-(2-hydroxyacyl)glutathione + H2O = a 2-hydroxy carboxylate + glutathione + H(+). It functions in the pathway secondary metabolite metabolism; methylglyoxal degradation; (R)-lactate from methylglyoxal: step 2/2. Its function is as follows. Thiolesterase that catalyzes the hydrolysis of S-D-lactoyl-glutathione to form glutathione and D-lactic acid. This is Hydroxyacylglutathione hydrolase from Pectobacterium atrosepticum (strain SCRI 1043 / ATCC BAA-672) (Erwinia carotovora subsp. atroseptica).